We begin with the raw amino-acid sequence, 258 residues long: MEEDLMEYAPNIPDNVLELIFSFLKLQDLRNCTLVCKSWYRFFCDENNEVWRAQCLQKVPAEAFKNDLLTVVPTYKAKLRAYFHAWNPFDCSRHVYIKPNGFTLHRNPVAQSTDGSRGKIGFKHGRHAWEVRWEGPLGTVAVVGIATKDAAIQCHGYYALLGADDQSWGWNLVDNLLLHNGDAHGIYPLLNNAPKYKVGERIRVILDCDENTLSFEKNYEFLGVAFTDLPEKNFYPTVAAVYGNTEISMVYLGAPLDG.

The 49-residue stretch at 6-54 folds into the F-box domain; the sequence is MEYAPNIPDNVLELIFSFLKLQDLRNCTLVCKSWYRFFCDENNEVWRAQ. One can recognise a B30.2/SPRY domain in the interval 64-256; sequence FKNDLLTVVP…ISMVYLGAPL (193 aa).

Belongs to the FBXO45/Fsn family. Component of an E3 ubiquitin ligase complex composed of hiw and Fsn.

Its subcellular location is the synapse. Its pathway is protein modification; protein ubiquitination. Its function is as follows. Required in the presynaptic motoneuron to down-regulate the levels of wnd and restrain synaptic terminal growth at the neuromuscular junction (NMJ). This chain is F-box/SPRY domain-containing protein 1, found in Anopheles gambiae (African malaria mosquito).